The primary structure comprises 343 residues: tRNA N6-adenosine threonylcarbamoyltransferase (343 aa).

Residues histidine 120 and histidine 124 each contribute to the Fe cation site. Substrate is bound by residues 142–146 (VVSGG), aspartate 175, glycine 188, aspartate 192, and asparagine 281. Aspartate 310 contributes to the Fe cation binding site.

The protein belongs to the KAE1 / TsaD family. Fe(2+) serves as cofactor.

It localises to the cytoplasm. It catalyses the reaction L-threonylcarbamoyladenylate + adenosine(37) in tRNA = N(6)-L-threonylcarbamoyladenosine(37) in tRNA + AMP + H(+). Functionally, required for the formation of a threonylcarbamoyl group on adenosine at position 37 (t(6)A37) in tRNAs that read codons beginning with adenine. Is involved in the transfer of the threonylcarbamoyl moiety of threonylcarbamoyl-AMP (TC-AMP) to the N6 group of A37, together with TsaE and TsaB. TsaD likely plays a direct catalytic role in this reaction. This is tRNA N6-adenosine threonylcarbamoyltransferase from Bacillus cereus (strain ATCC 10987 / NRS 248).